Reading from the N-terminus, the 266-residue chain is Uracil-DNA glycosylase (266 aa).

Positions 1–25 are disordered; sequence MTRRADPAQATLFDDDEPAGAPTAT. Aspartate 97 functions as the Proton acceptor in the catalytic mechanism.

The protein belongs to the uracil-DNA glycosylase (UDG) superfamily. UNG family.

The protein localises to the cytoplasm. It catalyses the reaction Hydrolyzes single-stranded DNA or mismatched double-stranded DNA and polynucleotides, releasing free uracil.. Excises uracil residues from the DNA which can arise as a result of misincorporation of dUMP residues by DNA polymerase or due to deamination of cytosine. In Ralstonia nicotianae (strain ATCC BAA-1114 / GMI1000) (Ralstonia solanacearum), this protein is Uracil-DNA glycosylase.